The primary structure comprises 316 residues: ATP synthase gamma chain (316 aa).

Belongs to the ATPase gamma chain family. As to quaternary structure, F-type ATPases have 2 components, CF(1) - the catalytic core - and CF(0) - the membrane proton channel. CF(1) has five subunits: alpha(3), beta(3), gamma(1), delta(1), epsilon(1). CF(0) has three main subunits: a, b and c.

It localises to the cellular thylakoid membrane. Its function is as follows. Produces ATP from ADP in the presence of a proton gradient across the membrane. The gamma chain is believed to be important in regulating ATPase activity and the flow of protons through the CF(0) complex. This chain is ATP synthase gamma chain, found in Synechococcus sp. (strain CC9605).